A 263-amino-acid polypeptide reads, in one-letter code: UPF0739 protein C1orf74 homolog (263 aa).

It belongs to the UPF0739 family.

The polypeptide is UPF0739 protein C1orf74 homolog (Bos taurus (Bovine)).